Here is a 115-residue protein sequence, read N- to C-terminus: MRFLLKLLSKEKENILLEGFWVLEVRVTTKARENRVVCLEDGILRVRVTEVPEKGKANDAVVALLANFLSIPKSDVTLIAGEASRRKKVLLPRSIKAFLLEQFPSESSSTTGKKS.

Belongs to the UPF0235 family.

This is UPF0235 protein CTA_0423 from Chlamydia trachomatis serovar A (strain ATCC VR-571B / DSM 19440 / HAR-13).